A 393-amino-acid polypeptide reads, in one-letter code: Pyrimidine monooxygenase RutA (393 aa).

Residues 79–80 (IK), asparagine 145, glutamate 154, 170–171 (RY), and serine 220 each bind FMN.

The protein belongs to the NtaA/SnaA/DszA monooxygenase family. RutA subfamily.

The enzyme catalyses uracil + FMNH2 + NADH + O2 = (Z)-3-ureidoacrylate + FMN + NAD(+) + H2O + H(+). It catalyses the reaction thymine + FMNH2 + NADH + O2 = (Z)-2-methylureidoacrylate + FMN + NAD(+) + H2O + H(+). In terms of biological role, catalyzes the pyrimidine ring opening between N-3 and C-4 by an unusual flavin hydroperoxide-catalyzed mechanism, adding oxygen atoms in the process to yield ureidoacrylate peracid, that immediately reacts with FMN forming ureidoacrylate and FMN-N(5)-oxide. The FMN-N(5)-oxide reacts spontaneously with NADH to produce FMN. Requires the flavin reductase RutF to regenerate FMN in vivo. The polypeptide is Pyrimidine monooxygenase RutA (Escherichia coli O139:H28 (strain E24377A / ETEC)).